Reading from the N-terminus, the 281-residue chain is Protein NipSnap homolog 2 (281 aa).

The N-terminal 27 residues, 1–27, are a transit peptide targeting the mitochondrion; that stretch reads MAARVLLARGGLLRPAAQSAFLPGLRT.

It belongs to the NipSnap family. As to quaternary structure, interacts with CALCOCO2/NDP52, NBR1, SQSTM1/p62, TAX1BP1 and WDFY3/ALFY. Interacts with ATG8 family proteins (MAP1LC3A, MAP1LC3B, MAP1LC3C, GABARAP, GABARAPL1 and GABARAPL2). Interacts with VDAC1.

The protein localises to the mitochondrion matrix. The protein resides in the cytoplasm. Functionally, protein involved in mitophagy by facilitating recruitment of the autophagy machinery required for clearance of damaged mitochondria. Accumulates on the mitochondria surface in response to mitochondrial depolarization and acts as a 'eat me' signal by recruiting proteins involved in selective autophagy, such as autophagy receptors (CALCOCO2/NDP52, NBR1, SQSTM1/p62, TAX1BP1 and WDFY3/ALFY) and ATG8 family proteins (MAP1LC3A, MAP1LC3B, MAP1LC3C, GABARAP, GABARAPL1 and GABARAPL2). May act as a positive regulator of L-type calcium channels. In Mus musculus (Mouse), this protein is Protein NipSnap homolog 2.